The primary structure comprises 732 residues: Lanosterol synthase (732 aa).

Position 2 is an N-acetylthreonine (Thr2). PFTB repeat units lie at residues 77 to 121, 124 to 165, 424 to 468, 483 to 528, 560 to 600, 612 to 653, and 670 to 712; these read ALNG…PLPA, REEI…RILG, PDNP…LLLQ, LCDA…MIDY, LTQG…ACMG, VSRA…HNTC, and QERG…NIFP. Asp455 (proton donor) is an active-site residue.

The protein belongs to the terpene cyclase/mutase family. In terms of assembly, monomer. Widely expressed. Expressed in the hair bulb, the outer root sheath and hair matrix of the hair follicle epithelium. Also detected in dermal papilla, epidermis, sweat glands, sebaceous glands, and blood vessels.

The protein resides in the endoplasmic reticulum membrane. The enzyme catalyses (S)-2,3-epoxysqualene = lanosterol. The protein operates within terpene metabolism; lanosterol biosynthesis; lanosterol from farnesyl diphosphate: step 3/3. Key enzyme in the cholesterol biosynthesis pathway. Catalyzes the cyclization of (S)-2,3 oxidosqualene to lanosterol, a reaction that forms the sterol nucleus. Through the production of lanosterol may regulate lens protein aggregation and increase transparency. The chain is Lanosterol synthase (LSS) from Homo sapiens (Human).